Reading from the N-terminus, the 203-residue chain is Thymidylate kinase (203 aa).

Residue 9-16 participates in ATP binding; it reads GPEGSGKT.

The protein belongs to the thymidylate kinase family.

The catalysed reaction is dTMP + ATP = dTDP + ADP. Functionally, phosphorylation of dTMP to form dTDP in both de novo and salvage pathways of dTTP synthesis. The chain is Thymidylate kinase from Staphylococcus haemolyticus (strain JCSC1435).